The sequence spans 129 residues: D-ribose pyranase (129 aa).

Residue His-20 is the Proton donor of the active site. Substrate contacts are provided by residues Asp-28, His-96, and 118 to 120; that span reads YAN.

It belongs to the RbsD / FucU family. RbsD subfamily. As to quaternary structure, homodecamer.

The protein resides in the cytoplasm. The catalysed reaction is beta-D-ribopyranose = beta-D-ribofuranose. Its pathway is carbohydrate metabolism; D-ribose degradation; D-ribose 5-phosphate from beta-D-ribopyranose: step 1/2. In terms of biological role, catalyzes the interconversion of beta-pyran and beta-furan forms of D-ribose. This chain is D-ribose pyranase, found in Staphylococcus saprophyticus subsp. saprophyticus (strain ATCC 15305 / DSM 20229 / NCIMB 8711 / NCTC 7292 / S-41).